We begin with the raw amino-acid sequence, 347 residues long: Farnesyl pyrophosphate synthase (347 aa).

Lysine 50, arginine 53, and glutamine 88 together coordinate isopentenyl diphosphate. Mg(2+) is bound by residues aspartate 95 and aspartate 99. Residue arginine 104 participates in dimethylallyl diphosphate binding. Arginine 105 is an isopentenyl diphosphate binding site. Residues lysine 192, threonine 193, glutamine 232, lysine 249, and lysine 258 each coordinate dimethylallyl diphosphate.

This sequence belongs to the FPP/GGPP synthase family. As to quaternary structure, interacts with spo9. Mg(2+) serves as cofactor.

It localises to the cytoplasm. Its subcellular location is the nucleus. It catalyses the reaction isopentenyl diphosphate + dimethylallyl diphosphate = (2E)-geranyl diphosphate + diphosphate. It carries out the reaction isopentenyl diphosphate + (2E)-geranyl diphosphate = (2E,6E)-farnesyl diphosphate + diphosphate. The protein operates within isoprenoid biosynthesis; farnesyl diphosphate biosynthesis; farnesyl diphosphate from geranyl diphosphate and isopentenyl diphosphate: step 1/1. It participates in isoprenoid biosynthesis; geranyl diphosphate biosynthesis; geranyl diphosphate from dimethylallyl diphosphate and isopentenyl diphosphate: step 1/1. Farnesyl pyrophosphate synthase; part of the second module of ergosterol biosynthesis pathway that includes the middle steps of the pathway. Fps1 catalyzes the sequential condensation of isopentenyl pyrophosphate with dimethylallyl pyrophosphate, and then with the resultant geranylpyrophosphate to the ultimate product farnesyl pyrophosphate. The second module is carried out in the vacuole and involves the formation of farnesyl diphosphate, which is also an important intermediate in the biosynthesis of ubiquinone, dolichol, heme and prenylated proteins. Activity by the mevalonate kinase erg12 first converts mevalonate into 5-phosphomevalonate. 5-phosphomevalonate is then further converted to 5-diphosphomevalonate by the phosphomevalonate kinase erg8. The diphosphomevalonate decarboxylase mvd1 then produces isopentenyl diphosphate. The isopentenyl-diphosphate delta-isomerase idi1 then catalyzes the 1,3-allylic rearrangement of the homoallylic substrate isopentenyl (IPP) to its highly electrophilic allylic isomer, dimethylallyl diphosphate (DMAPP). Finally the farnesyl diphosphate synthase fps1 catalyzes the sequential condensation of isopentenyl pyrophosphate with dimethylallyl pyrophosphate, and then with the resultant geranylpyrophosphate to the ultimate product farnesyl pyrophosphate. The chain is Farnesyl pyrophosphate synthase from Schizosaccharomyces pombe (strain 972 / ATCC 24843) (Fission yeast).